Reading from the N-terminus, the 338-residue chain is Aspartate carbamoyltransferase catalytic subunit (338 aa).

Residues Arg72 and Thr73 each coordinate carbamoyl phosphate. Lys100 provides a ligand contact to L-aspartate. Arg122, His152, and Gln155 together coordinate carbamoyl phosphate. The L-aspartate site is built by Arg186 and Arg243. Residues Gly284 and Pro285 each contribute to the carbamoyl phosphate site.

It belongs to the aspartate/ornithine carbamoyltransferase superfamily. ATCase family. In terms of assembly, heterododecamer (2C3:3R2) of six catalytic PyrB chains organized as two trimers (C3), and six regulatory PyrI chains organized as three dimers (R2).

It carries out the reaction carbamoyl phosphate + L-aspartate = N-carbamoyl-L-aspartate + phosphate + H(+). It participates in pyrimidine metabolism; UMP biosynthesis via de novo pathway; (S)-dihydroorotate from bicarbonate: step 2/3. In terms of biological role, catalyzes the condensation of carbamoyl phosphate and aspartate to form carbamoyl aspartate and inorganic phosphate, the committed step in the de novo pyrimidine nucleotide biosynthesis pathway. The sequence is that of Aspartate carbamoyltransferase catalytic subunit from Acinetobacter baumannii (strain AB307-0294).